The chain runs to 290 residues: 4-diphosphocytidyl-2-C-methyl-D-erythritol kinase (290 aa).

The active site involves lysine 13. Position 96–106 (96–106 (PMGGGIGGGSS)) interacts with ATP. The active site involves aspartate 138.

The protein belongs to the GHMP kinase family. IspE subfamily.

The catalysed reaction is 4-CDP-2-C-methyl-D-erythritol + ATP = 4-CDP-2-C-methyl-D-erythritol 2-phosphate + ADP + H(+). It participates in isoprenoid biosynthesis; isopentenyl diphosphate biosynthesis via DXP pathway; isopentenyl diphosphate from 1-deoxy-D-xylulose 5-phosphate: step 3/6. Its function is as follows. Catalyzes the phosphorylation of the position 2 hydroxy group of 4-diphosphocytidyl-2C-methyl-D-erythritol. The chain is 4-diphosphocytidyl-2-C-methyl-D-erythritol kinase from Vibrio campbellii (strain ATCC BAA-1116).